A 222-amino-acid chain; its full sequence is UPF0502 protein Shewmr7_1629 (222 aa).

It belongs to the UPF0502 family.

The polypeptide is UPF0502 protein Shewmr7_1629 (Shewanella sp. (strain MR-7)).